The chain runs to 107 residues: uncharacterized protein (107 aa).

Residues 86–107 (KRAETARLPAATPQKRTGPARG) are disordered.

This is an uncharacterized protein from Saccharomyces cerevisiae (strain ATCC 204508 / S288c) (Baker's yeast).